A 319-amino-acid polypeptide reads, in one-letter code: Beta-ketoacyl-[acyl-carrier-protein] synthase III (319 aa).

Active-site residues include Cys-112 and His-246. An ACP-binding region spans residues 247–251; that stretch reads QANFR. Asn-276 is an active-site residue.

This sequence belongs to the thiolase-like superfamily. FabH family. As to quaternary structure, homodimer.

Its subcellular location is the cytoplasm. The catalysed reaction is malonyl-[ACP] + acetyl-CoA + H(+) = 3-oxobutanoyl-[ACP] + CO2 + CoA. It functions in the pathway lipid metabolism; fatty acid biosynthesis. In terms of biological role, catalyzes the condensation reaction of fatty acid synthesis by the addition to an acyl acceptor of two carbons from malonyl-ACP. Catalyzes the first condensation reaction which initiates fatty acid synthesis and may therefore play a role in governing the total rate of fatty acid production. Possesses both acetoacetyl-ACP synthase and acetyl transacylase activities. Its substrate specificity determines the biosynthesis of branched-chain and/or straight-chain of fatty acids. The polypeptide is Beta-ketoacyl-[acyl-carrier-protein] synthase III (Shewanella oneidensis (strain ATCC 700550 / JCM 31522 / CIP 106686 / LMG 19005 / NCIMB 14063 / MR-1)).